The sequence spans 196 residues: Guanylate kinase (196 aa).

The region spanning 8-189 (GKIIIISGPS…AADKLRHILY (182 aa)) is the Guanylate kinase-like domain. 15–22 (GPSGVGKK) contributes to the ATP binding site.

It belongs to the guanylate kinase family.

Its subcellular location is the cytoplasm. The enzyme catalyses GMP + ATP = GDP + ADP. Functionally, essential for recycling GMP and indirectly, cGMP. The chain is Guanylate kinase from Malacoplasma penetrans (strain HF-2) (Mycoplasma penetrans).